The sequence spans 169 residues: 6,7-dimethyl-8-ribityllumazine synthase (169 aa).

5-amino-6-(D-ribitylamino)uracil is bound by residues Trp-27, 61 to 63 (SYE), and 90 to 92 (VLI). 95–96 (ST) lines the (2S)-2-hydroxy-3-oxobutyl phosphate pocket. The Proton donor role is filled by His-98. A 5-amino-6-(D-ribitylamino)uracil-binding site is contributed by Phe-123. Arg-137 provides a ligand contact to (2S)-2-hydroxy-3-oxobutyl phosphate.

This sequence belongs to the DMRL synthase family. Homopentamer.

It is found in the mitochondrion intermembrane space. The catalysed reaction is (2S)-2-hydroxy-3-oxobutyl phosphate + 5-amino-6-(D-ribitylamino)uracil = 6,7-dimethyl-8-(1-D-ribityl)lumazine + phosphate + 2 H2O + H(+). It participates in cofactor biosynthesis; riboflavin biosynthesis; riboflavin from 2-hydroxy-3-oxobutyl phosphate and 5-amino-6-(D-ribitylamino)uracil: step 1/2. In terms of biological role, catalyzes the formation of 6,7-dimethyl-8-ribityllumazine by condensation of 5-amino-6-(D-ribitylamino)uracil with 3,4-dihydroxy-2-butanone 4-phosphate. This is the penultimate step in the biosynthesis of riboflavin. In Saccharomyces cerevisiae (strain ATCC 204508 / S288c) (Baker's yeast), this protein is 6,7-dimethyl-8-ribityllumazine synthase (RIB4).